Here is a 371-residue protein sequence, read N- to C-terminus: Cytochrome b (371 aa).

Transmembrane regions (helical) follow at residues 25–45, 69–90, 105–125, and 170–190; these read FGSMLLTCLALQVLTGFFLAV, WMMQNLHAIGASMFFICIYIHI, WMSGITLLITLMATAFFGYVL, and FFALHFILPFAIISLSSLHVI. Positions 75 and 89 each coordinate heme b. Positions 174 and 188 each coordinate heme b. H193 contacts a ubiquinone. 4 helical membrane passes run 218-238, 280-300, 312-332, and 339-358; these read HKDLLLLTLMMMFLFIIVSFF, LGGALALVMSIMILFCTPFTH, LSQLMFWTLVSTFITITWAAT, and FITISQVTSILYFTFFLSIP.

The protein belongs to the cytochrome b family. The cytochrome bc1 complex contains 3 respiratory subunits (MT-CYB, CYC1 and UQCRFS1), 2 core proteins (UQCRC1 and UQCRC2) and probably 6 low-molecular weight proteins. Heme b is required as a cofactor.

It is found in the mitochondrion inner membrane. In terms of biological role, component of the ubiquinol-cytochrome c reductase complex (complex III or cytochrome b-c1 complex) that is part of the mitochondrial respiratory chain. The b-c1 complex mediates electron transfer from ubiquinol to cytochrome c. Contributes to the generation of a proton gradient across the mitochondrial membrane that is then used for ATP synthesis. This chain is Cytochrome b (MT-CYB), found in Liasis mackloti savuensis (Savu python).